We begin with the raw amino-acid sequence, 468 residues long: Purple acid phosphatase 10 (468 aa).

A signal peptide spans 1–25 (MGRVRKSDFGSIVLVLCCVLNSLLC). 2 N-linked (GlcNAc...) asparagine glycosylation sites follow: asparagine 95 and asparagine 113. A Fe cation-binding site is contributed by aspartate 167. N-linked (GlcNAc...) asparagine glycosylation is present at asparagine 175. Aspartate 196 and tyrosine 199 together coordinate Fe cation. Aspartate 196 is a Zn(2+) binding site. Asparagine 233 provides a ligand contact to Zn(2+). Position 233 (asparagine 233) interacts with substrate. Asparagine 306 carries an N-linked (GlcNAc...) asparagine glycan. Position 318 (histidine 318) interacts with Zn(2+). Residue histidine 328 is the Proton donor of the active site. Histidine 355 serves as a coordination point for Zn(2+). 355 to 357 (HVH) is a binding site for substrate. Histidine 357 contributes to the Fe cation binding site. N-linked (GlcNAc...) asparagine glycosylation occurs at asparagine 428.

This sequence belongs to the metallophosphoesterase superfamily. Purple acid phosphatase family. As to quaternary structure, homodimer; disulfide-linked. Requires Fe cation as cofactor. Zn(2+) serves as cofactor. In terms of tissue distribution, expressed in roots, stems, leaves, flowers and siliques.

It localises to the secreted. The protein resides in the cytoplasm. It carries out the reaction a phosphate monoester + H2O = an alcohol + phosphate. This Arabidopsis thaliana (Mouse-ear cress) protein is Purple acid phosphatase 10 (PAP10).